Consider the following 142-residue polypeptide: Large ribosomal subunit protein uL13c (142 aa).

The protein belongs to the universal ribosomal protein uL13 family. In terms of assembly, part of the 50S ribosomal subunit.

It is found in the plastid. The protein resides in the chloroplast. This Porphyra purpurea (Red seaweed) protein is Large ribosomal subunit protein uL13c.